We begin with the raw amino-acid sequence, 524 residues long: Thermosome subunit 3 (524 aa).

It belongs to the TCP-1 chaperonin family. The thermosome or CCT complex is a oligomeric complex of two octameric double-ring structures; the complex is probably a heterooligomer of CCT1, CCT2 and CCT3 with yet unknown stoichiometry.

Molecular chaperone that assists in the folding or refolding of nascent or denatured proteins along with ATP hydrolysis. ATPase activity is highest in thermosome assemblies containing CCT1:CCT2, followed by assemblies containing CCT1:CCT2:CCT3. Not required for thermosome ATPase activity. Not required for growth. The sequence is that of Thermosome subunit 3 (cct3) from Haloferax volcanii (strain ATCC 29605 / DSM 3757 / JCM 8879 / NBRC 14742 / NCIMB 2012 / VKM B-1768 / DS2) (Halobacterium volcanii).